A 725-amino-acid chain; its full sequence is Ophiobolin F synthase (725 aa).

The segment at 1-322 (MEYKYSTIVD…RYHADAKFNE (322 aa)) is (7Z)-ophiobola-7,19-dien-3-ol synthase. Mg(2+) is bound by residues D93 and D97. D93 lines the substrate pocket. A DDXXD 1 motif is present at residues 93-97 (DDEID). Substrate-binding positions include 182-185 (RCMD), N226, 230-234 (SYEKE), and 313-314 (RY). Residues 226-234 (NDLFSYEKE) carry the NSE/DTE motif. The interval 323-725 (LQMLRAEHGV…LRMMLELLKV (403 aa)) is geranylfarnesyl diphosphate synthase. Positions 362–388 (GVNGVNGKRKRSGEETADDARTNGNGI) are disordered. A compositionally biased stretch (basic and acidic residues) spans 373 to 382 (SGEETADDAR). Isopentenyl diphosphate-binding residues include K436, R439, and H468. 2 residues coordinate Mg(2+): D475 and D479. Positions 475 to 479 (DDIED) match the DDXXD 2 motif. Dimethylallyl diphosphate is bound at residue R484. R485 provides a ligand contact to isopentenyl diphosphate. Dimethylallyl diphosphate contacts are provided by K562, T563, Q601, N608, K618, and K628.

It in the N-terminal section; belongs to the terpene synthase family. The protein in the C-terminal section; belongs to the FPP/GGPP synthase family. The cofactor is Mg(2+).

It catalyses the reaction isopentenyl diphosphate + (2E,6E)-farnesyl diphosphate = (2E,6E,10E)-geranylgeranyl diphosphate + diphosphate. The enzyme catalyses isopentenyl diphosphate + (2E,6E,10E)-geranylgeranyl diphosphate = (2E,6E,10E,14E)-geranylfarnesyl diphosphate + diphosphate. It carries out the reaction (2E,6E,10E,14E)-geranylfarnesyl diphosphate + H2O = ophiobolin F + diphosphate. Its pathway is secondary metabolite biosynthesis; terpenoid biosynthesis. Functionally, bifunctional sesterterpene synthase that converts isopentenyl diphosphate (IPP) and dimethylallyl diphosphate (DMAPP) into ophiobolin F. The C-terminal prenyltransferase (PT) domain of AcldOS converts isopentenyl diphosphate and dimethylallyl diphosphate into geranylfarnesyl diphosphate (GFPP), whereas the N-terminal terpene cyclase (TC) domain catalyzes the cyclization of GFPP to ophiobolin F. This Aspergillus calidoustus protein is Ophiobolin F synthase.